The primary structure comprises 343 residues: Heat-inducible transcription repressor HrcA (343 aa).

The protein belongs to the HrcA family.

Functionally, negative regulator of class I heat shock genes (grpE-dnaK-dnaJ and groELS operons). Prevents heat-shock induction of these operons. The protein is Heat-inducible transcription repressor HrcA of Mycolicibacterium paratuberculosis (strain ATCC BAA-968 / K-10) (Mycobacterium paratuberculosis).